The sequence spans 70 residues: Large ribosomal subunit protein bL31c (70 aa).

It belongs to the bacterial ribosomal protein bL31 family. Type A subfamily. As to quaternary structure, part of the 50S ribosomal subunit.

It localises to the plastid. The protein resides in the chloroplast. Its function is as follows. Binds the 23S rRNA. This is Large ribosomal subunit protein bL31c from Porphyra purpurea (Red seaweed).